Here is a 216-residue protein sequence, read N- to C-terminus: Small ribosomal subunit protein uS3 (216 aa).

Residues 24–93 form the KH type-2 domain; the sequence is IKEFLEYRLA…NPQIDVIDVS (70 aa).

It belongs to the universal ribosomal protein uS3 family. As to quaternary structure, part of the 30S ribosomal subunit.

Functionally, binds the lower part of the 30S subunit head. This chain is Small ribosomal subunit protein uS3, found in Pyrobaculum calidifontis (strain DSM 21063 / JCM 11548 / VA1).